The primary structure comprises 185 residues: Sulfopyruvate decarboxylase subunit beta (185 aa).

This sequence belongs to the TPP enzyme family. In terms of assembly, heterododecamer composed of 6 subunits alpha and 6 subunits beta. The cofactor is thiamine diphosphate.

The catalysed reaction is 3-sulfopyruvate + H(+) = sulfoacetaldehyde + CO2. It participates in cofactor biosynthesis; coenzyme M biosynthesis; sulfoacetaldehyde from phosphoenolpyruvate and sulfite: step 4/4. Involved in the biosynthesis of the coenzyme M (2-mercaptoethanesulfonic acid). Catalyzes the decarboxylation of sulfopyruvate to sulfoacetaldehyde. The polypeptide is Sulfopyruvate decarboxylase subunit beta (Methanothermobacter thermautotrophicus (strain ATCC 29096 / DSM 1053 / JCM 10044 / NBRC 100330 / Delta H) (Methanobacterium thermoautotrophicum)).